Reading from the N-terminus, the 380-residue chain is Chorismate synthase (380 aa).

The NADP(+) site is built by Arg40 and Arg46. FMN-binding positions include 128 to 130 (RSS), 247 to 248 (QA), Gly292, 307 to 311 (KPIPT), and Arg333.

This sequence belongs to the chorismate synthase family. As to quaternary structure, homotetramer. FMNH2 serves as cofactor.

It carries out the reaction 5-O-(1-carboxyvinyl)-3-phosphoshikimate = chorismate + phosphate. It functions in the pathway metabolic intermediate biosynthesis; chorismate biosynthesis; chorismate from D-erythrose 4-phosphate and phosphoenolpyruvate: step 7/7. Functionally, catalyzes the anti-1,4-elimination of the C-3 phosphate and the C-6 proR hydrogen from 5-enolpyruvylshikimate-3-phosphate (EPSP) to yield chorismate, which is the branch point compound that serves as the starting substrate for the three terminal pathways of aromatic amino acid biosynthesis. This reaction introduces a second double bond into the aromatic ring system. In Alkaliphilus metalliredigens (strain QYMF), this protein is Chorismate synthase.